The sequence spans 86 residues: Latartoxin-1b (86 aa).

Positions 1–19 (MKILVLAVVCTVLLQVALS) are cleaved as a signal peptide. Positions 20–26 (ADSEEVR) are cleaved as a propeptide — removed in mature form. The Processing quadruplet motif signature appears at 23-26 (EEVR). 4 cysteine pairs are disulfide-bonded: C28-C43, C35-C48, C42-C65, and C50-C63.

The protein belongs to the neurotoxin 19 (CSTX) family. Contains 4 disulfide bonds. In terms of processing, cleavage of the propeptide depends on the processing quadruplet motif (XXXR, with at least one of X being E). As to expression, expressed by the venom gland.

The protein localises to the secreted. Functionally, insect toxin. In Lachesana tarabaevi (Spider), this protein is Latartoxin-1b.